Here is a 469-residue protein sequence, read N- to C-terminus: GTPase Der (469 aa).

2 consecutive EngA-type G domains span residues 30–193 (PVLA…PEVA) and 203–376 (RRVA…ASWD). Residues 36–43 (GRPNVGKS), 83–87 (DTGGW), 145–148 (NKVD), 209–216 (GKPNVGKS), 256–260 (DTAGL), and 321–324 (NKWD) each bind GTP. The region spanning 377–459 (TRIPTGPLNS…PIRINVRVRE (83 aa)) is the KH-like domain.

This sequence belongs to the TRAFAC class TrmE-Era-EngA-EngB-Septin-like GTPase superfamily. EngA (Der) GTPase family. In terms of assembly, associates with the 50S ribosomal subunit.

In terms of biological role, GTPase that plays an essential role in the late steps of ribosome biogenesis. The protein is GTPase Der of Mycobacterium marinum (strain ATCC BAA-535 / M).